Here is a 333-residue protein sequence, read N- to C-terminus: Glycerol-3-phosphate dehydrogenase [NAD(P)+] (333 aa).

NADPH-binding residues include serine 10, phenylalanine 11, arginine 31, and lysine 105. Sn-glycerol 3-phosphate contacts are provided by lysine 105, glycine 136, and serine 138. Alanine 140 contributes to the NADPH binding site. Lysine 191, aspartate 244, serine 254, arginine 255, and asparagine 256 together coordinate sn-glycerol 3-phosphate. Catalysis depends on lysine 191, which acts as the Proton acceptor. Arginine 255 serves as a coordination point for NADPH. Residues valine 279 and glutamate 281 each coordinate NADPH.

The protein belongs to the NAD-dependent glycerol-3-phosphate dehydrogenase family.

It localises to the cytoplasm. It carries out the reaction sn-glycerol 3-phosphate + NAD(+) = dihydroxyacetone phosphate + NADH + H(+). It catalyses the reaction sn-glycerol 3-phosphate + NADP(+) = dihydroxyacetone phosphate + NADPH + H(+). It participates in membrane lipid metabolism; glycerophospholipid metabolism. Functionally, catalyzes the reduction of the glycolytic intermediate dihydroxyacetone phosphate (DHAP) to sn-glycerol 3-phosphate (G3P), the key precursor for phospholipid synthesis. This is Glycerol-3-phosphate dehydrogenase [NAD(P)+] from Leptospira biflexa serovar Patoc (strain Patoc 1 / Ames).